Here is a 131-residue protein sequence, read N- to C-terminus: Small ribosomal subunit protein uS8 (131 aa).

The protein belongs to the universal ribosomal protein uS8 family. Part of the 30S ribosomal subunit. Contacts proteins S5 and S12.

Functionally, one of the primary rRNA binding proteins, it binds directly to 16S rRNA central domain where it helps coordinate assembly of the platform of the 30S subunit. The chain is Small ribosomal subunit protein uS8 from Parabacteroides distasonis (strain ATCC 8503 / DSM 20701 / CIP 104284 / JCM 5825 / NCTC 11152).